A 63-amino-acid chain; its full sequence is DNA-directed RNA polymerase 7 kDa subunit (63 aa).

It belongs to the poxviridae DNA-directed RNA polymerase 7 kDa subunit family. As to quaternary structure, the DNA-dependent RNA polymerase (vRNAP) consists of eight subunits encoded by early viral genes and termed according to their apparent molecular masses Rpo147, Rpo132, Rpo35, Rpo30, Rpo22, Rpo19, Rpo18, and Rpo7. The same holoenzyme, with the addition of the transcription-specificity factor RAP94, is used for early gene expression.

The protein resides in the virion. The enzyme catalyses RNA(n) + a ribonucleoside 5'-triphosphate = RNA(n+1) + diphosphate. Functionally, part of the DNA-dependent RNA polymerase which catalyzes the transcription of viral DNA into RNA using the four ribonucleoside triphosphates as substrates. Responsible for the transcription of early, intermediate and late genes. DNA-dependent RNA polymerase associates with the early transcription factor (ETF), itself composed of OPG118 and OPG134, thereby allowing the early genes transcription. Late transcription, and probably also intermediate transcription, require newly synthesized RNA polymerase. This Monkeypox virus protein is DNA-directed RNA polymerase 7 kDa subunit (OPG090).